The sequence spans 421 residues: 3-phosphoshikimate 1-carboxyvinyltransferase (421 aa).

3-phosphoshikimate contacts are provided by Lys-19, Ser-20, and Arg-24. Phosphoenolpyruvate is bound at residue Lys-19. Residues Gly-88 and Arg-116 each coordinate phosphoenolpyruvate. Positions 160, 162, 307, and 334 each coordinate 3-phosphoshikimate. Residue Gln-162 participates in phosphoenolpyruvate binding. The active-site Proton acceptor is the Asp-307. Arg-338 and Arg-380 together coordinate phosphoenolpyruvate.

Belongs to the EPSP synthase family. In terms of assembly, monomer.

Its subcellular location is the cytoplasm. It catalyses the reaction 3-phosphoshikimate + phosphoenolpyruvate = 5-O-(1-carboxyvinyl)-3-phosphoshikimate + phosphate. It participates in metabolic intermediate biosynthesis; chorismate biosynthesis; chorismate from D-erythrose 4-phosphate and phosphoenolpyruvate: step 6/7. In terms of biological role, catalyzes the transfer of the enolpyruvyl moiety of phosphoenolpyruvate (PEP) to the 5-hydroxyl of shikimate-3-phosphate (S3P) to produce enolpyruvyl shikimate-3-phosphate and inorganic phosphate. This chain is 3-phosphoshikimate 1-carboxyvinyltransferase, found in Thermotoga sp. (strain RQ2).